The sequence spans 536 residues: Cytochrome P450 78A7 (536 aa).

The helical transmembrane segment at L36–V56 threads the bilayer. C481 contacts heme.

It belongs to the cytochrome P450 family. Heme is required as a cofactor.

Its subcellular location is the membrane. Functions probably in association with CYP78A5 in regulating relative growth of the shoot apical meristem and plant organs via a non-cell-autonomous signal. The protein is Cytochrome P450 78A7 (CYP78A7) of Arabidopsis thaliana (Mouse-ear cress).